The following is a 140-amino-acid chain: UPF0102 protein ACIAD1132 (140 aa).

The protein belongs to the UPF0102 family.

The protein is UPF0102 protein ACIAD1132 of Acinetobacter baylyi (strain ATCC 33305 / BD413 / ADP1).